The primary structure comprises 515 residues: Gamma aminobutyrate transaminase 1, mitochondrial (515 aa).

The transit peptide at 1 to 57 (MAKISRLFGSTVKAAITAQAGFHGKRIPAVSSLQEHIVKSTPARYNSTQACLENDIS) directs the protein to the mitochondrion. 172–173 (GS) is a binding site for pyridoxal 5'-phosphate. A substrate-binding site is contributed by Y205. Residue D312 participates in pyridoxal 5'-phosphate binding. K341 contributes to the substrate binding site. K341 is subject to N6-(pyridoxal phosphate)lysine.

Belongs to the class-III pyridoxal-phosphate-dependent aminotransferase family. Expressed in leaves, roots, stems, flowers and fruits.

It localises to the mitochondrion. It carries out the reaction 4-aminobutanoate + pyruvate = succinate semialdehyde + L-alanine. The enzyme catalyses 4-aminobutanoate + glyoxylate = succinate semialdehyde + glycine. Transaminase that degrades gamma-amino butyric acid (GABA) and uses pyruvate or glyoxylate as amino-group acceptor. Cannot use beta-alanine, ornithine, acetylornithine, serine, glycine, asparagine, glutamine, glutamate, valine, leucine, isoleucine, methionine, phenylalanine, histidine, lysine, arginine, aspartate, threonine, tyrosine, tryptophan, proline, or cysteine as amino donors. Acts predominantly in vegetative tissues. This Solanum lycopersicum (Tomato) protein is Gamma aminobutyrate transaminase 1, mitochondrial (GABA-TP1).